The primary structure comprises 177 residues: MSLNRSEKEAVISDVTSLAAKAQTLVMAEYRGITVADMTKLRSEARSKGVTLSVLKNTLARRAVAGSAFEIVGDQMTGPLIYGFSEDAVAAAKVVADFAKTNDKLVIRGGAFGGKALDVNGVKQLANIPSKEVLLAQLLGLMQSPISRTARVLAALAEKRGGGEAAPADAPAEAQAA.

The protein belongs to the universal ribosomal protein uL10 family. In terms of assembly, part of the ribosomal stalk of the 50S ribosomal subunit. The N-terminus interacts with L11 and the large rRNA to form the base of the stalk. The C-terminus forms an elongated spine to which L12 dimers bind in a sequential fashion forming a multimeric L10(L12)X complex.

Forms part of the ribosomal stalk, playing a central role in the interaction of the ribosome with GTP-bound translation factors. This chain is Large ribosomal subunit protein uL10, found in Variovorax paradoxus (strain S110).